A 260-amino-acid polypeptide reads, in one-letter code: Proteasome subunit alpha (260 aa).

Belongs to the peptidase T1A family. As to quaternary structure, the 20S proteasome core is composed of 14 alpha and 14 beta subunits that assemble into four stacked heptameric rings, resulting in a barrel-shaped structure. The two inner rings, each composed of seven catalytic beta subunits, are sandwiched by two outer rings, each composed of seven alpha subunits. The catalytic chamber with the active sites is on the inside of the barrel. Has a gated structure, the ends of the cylinder being occluded by the N-termini of the alpha-subunits. Is capped at one or both ends by the proteasome regulatory ATPase, PAN.

The protein localises to the cytoplasm. Its activity is regulated as follows. The formation of the proteasomal ATPase PAN-20S proteasome complex, via the docking of the C-termini of PAN into the intersubunit pockets in the alpha-rings, triggers opening of the gate for substrate entry. Interconversion between the open-gate and close-gate conformations leads to a dynamic regulation of the 20S proteasome proteolysis activity. Its function is as follows. Component of the proteasome core, a large protease complex with broad specificity involved in protein degradation. This chain is Proteasome subunit alpha, found in Thermococcus kodakarensis (strain ATCC BAA-918 / JCM 12380 / KOD1) (Pyrococcus kodakaraensis (strain KOD1)).